The primary structure comprises 220 residues: Recombination protein RecR (220 aa).

Residues 57–72 (CPICFNITDAEKCDVC) form a C4-type zinc finger. The 94-residue stretch at 80 to 173 (RTICVVEEPG…AISRIAYGVP (94 aa)) folds into the Toprim domain. The segment at 190-220 (LTGRQTVSKPQPPQRPGDEDGADGAAVPASR) is disordered.

This sequence belongs to the RecR family.

Functionally, may play a role in DNA repair. It seems to be involved in an RecBC-independent recombinational process of DNA repair. It may act with RecF and RecO. The polypeptide is Recombination protein RecR (Deinococcus radiodurans (strain ATCC 13939 / DSM 20539 / JCM 16871 / CCUG 27074 / LMG 4051 / NBRC 15346 / NCIMB 9279 / VKM B-1422 / R1)).